A 118-amino-acid chain; its full sequence is Holo-[acyl-carrier-protein] synthase (118 aa).

Asp-8 and Glu-58 together coordinate Mg(2+).

Belongs to the P-Pant transferase superfamily. AcpS family. It depends on Mg(2+) as a cofactor.

The protein resides in the cytoplasm. The catalysed reaction is apo-[ACP] + CoA = holo-[ACP] + adenosine 3',5'-bisphosphate + H(+). In terms of biological role, transfers the 4'-phosphopantetheine moiety from coenzyme A to a Ser of acyl-carrier-protein. This is Holo-[acyl-carrier-protein] synthase from Streptococcus pyogenes serotype M5 (strain Manfredo).